Reading from the N-terminus, the 21-residue chain is Testis ecdysiotropin peptide 1 (21 aa).

The disordered stretch occupies residues 1–21; sequence ISDFDEYEPLNDADNNEVLDF.

Functionally, start or boost ecdysteroid synthesis in testis of larvae and pupae. The sequence is that of Testis ecdysiotropin peptide 1 from Lymantria dispar (Gypsy moth).